Consider the following 667-residue polypeptide: Sterile alpha motif domain-containing protein 15 (667 aa).

Residues 1–18 (MAEVPEDYDSGPDEDGEP) are compositionally biased toward acidic residues. 2 disordered regions span residues 1-108 (MAEV…KSER) and 147-424 (SAME…IKSK). Composition is skewed to basic and acidic residues over residues 19 to 53 (ESER…HEPQ), 84 to 93 (IAKESKRDVP), 187 to 196 (ESLRVQHEET), and 228 to 266 (TKPD…KSSE). Residues 268-277 (AGLEPPEETQ) show a composition bias toward acidic residues. Basic and acidic residues-rich tracts occupy residues 284-314 (MQRK…KSTD), 322-338 (EEIK…KPNE), 346-364 (EMMK…EEKN), and 381-422 (PRVE…EPIK). The SAM domain occupies 538 to 601 (WDPEKVAEWI…SRHTRELLEI (64 aa)).

The chain is Sterile alpha motif domain-containing protein 15 (SAMD15) from Macaca fascicularis (Crab-eating macaque).